We begin with the raw amino-acid sequence, 248 residues long: Phycocyanobilin:ferredoxin oxidoreductase (248 aa).

This sequence belongs to the HY2 family.

It catalyses the reaction (2R,3Z)-phycocyanobilin + 4 oxidized [2Fe-2S]-[ferredoxin] = biliverdin IXalpha + 4 reduced [2Fe-2S]-[ferredoxin] + 4 H(+). Functionally, catalyzes the four-electron reduction of biliverdin IX-alpha (2-electron reduction at both the A and D rings); the reaction proceeds via an isolatable 2-electron intermediate, 181,182-dihydrobiliverdin. The chain is Phycocyanobilin:ferredoxin oxidoreductase from Synechococcus sp. (strain ATCC 27144 / PCC 6301 / SAUG 1402/1) (Anacystis nidulans).